A 232-amino-acid chain; its full sequence is Urease accessory protein UreF (232 aa).

It belongs to the UreF family. In terms of assembly, ureD, UreF and UreG form a complex that acts as a GTP-hydrolysis-dependent molecular chaperone, activating the urease apoprotein by helping to assemble the nickel containing metallocenter of UreC. The UreE protein probably delivers the nickel.

Its subcellular location is the cytoplasm. Its function is as follows. Required for maturation of urease via the functional incorporation of the urease nickel metallocenter. This chain is Urease accessory protein UreF, found in Trichodesmium erythraeum (strain IMS101).